Consider the following 151-residue polypeptide: Small ribosomal subunit protein uS15 (151 aa).

This sequence belongs to the universal ribosomal protein uS15 family.

The protein is Small ribosomal subunit protein uS15 (RPS13) of Pisum sativum (Garden pea).